The chain runs to 310 residues: Ribosomal RNA small subunit methyltransferase H (310 aa).

Residues 35–37 (GGH), Asp52, Phe79, Asp100, and Gln107 contribute to the S-adenosyl-L-methionine site.

Belongs to the methyltransferase superfamily. RsmH family.

The protein resides in the cytoplasm. The catalysed reaction is cytidine(1402) in 16S rRNA + S-adenosyl-L-methionine = N(4)-methylcytidine(1402) in 16S rRNA + S-adenosyl-L-homocysteine + H(+). In terms of biological role, specifically methylates the N4 position of cytidine in position 1402 (C1402) of 16S rRNA. In Anaeromyxobacter dehalogenans (strain 2CP-1 / ATCC BAA-258), this protein is Ribosomal RNA small subunit methyltransferase H.